A 250-amino-acid polypeptide reads, in one-letter code: 5'-nucleotidase SurE (250 aa).

Positions 8, 9, 39, and 91 each coordinate a divalent metal cation.

Belongs to the SurE nucleotidase family. It depends on a divalent metal cation as a cofactor.

It localises to the cytoplasm. It catalyses the reaction a ribonucleoside 5'-phosphate + H2O = a ribonucleoside + phosphate. In terms of biological role, nucleotidase that shows phosphatase activity on nucleoside 5'-monophosphates. The chain is 5'-nucleotidase SurE from Leptospira interrogans serogroup Icterohaemorrhagiae serovar copenhageni (strain Fiocruz L1-130).